A 494-amino-acid chain; its full sequence is MNAPVKPSQLIKGATGDWEVVIGLEIHAQVSSNAKLFSGAATEFGGDPNSHVSLVDAAMPGMLPVINEECVKQAIRSGLGLNAQINLRSVFDRKNYFYPDLPQGYQISQYKSPIVGEGEVVVDLPDGDSTTVGIERLHLEQDAGKLLHDQDPTSTFVDLNRSGVALMEIVSKPDLRSSEQAKAYVSKLRTILRYLGTCDGDMEKGSLRADVNVSVRKPGEPYGTRCEIKNVNSIRFIGQAIEYEARRQIGVLEDGGAIVQETRLFDAGKGETRSMRSKEEAHDYRYFPDPDLLPLEFSQAYVDELKAGLPELPDQKKARFIGSFGLSPDDAGVLVSERESADFYEAVLAALADAARDGKLAANWVINELFGRLNKDGQSIEVSPVSAAQLAAIVDLIGEGTISGKIAKELFEIVWTEGGDPRVLVEARGMKQVTDLSAIEKVVDEIIAGNPDKVAQAIAKPAMLGWFVGQVMKSSGGKANPQAVNDLLKRKLGL.

This sequence belongs to the GatB/GatE family. GatB subfamily. Heterotrimer of A, B and C subunits.

It catalyses the reaction L-glutamyl-tRNA(Gln) + L-glutamine + ATP + H2O = L-glutaminyl-tRNA(Gln) + L-glutamate + ADP + phosphate + H(+). The catalysed reaction is L-aspartyl-tRNA(Asn) + L-glutamine + ATP + H2O = L-asparaginyl-tRNA(Asn) + L-glutamate + ADP + phosphate + 2 H(+). Functionally, allows the formation of correctly charged Asn-tRNA(Asn) or Gln-tRNA(Gln) through the transamidation of misacylated Asp-tRNA(Asn) or Glu-tRNA(Gln) in organisms which lack either or both of asparaginyl-tRNA or glutaminyl-tRNA synthetases. The reaction takes place in the presence of glutamine and ATP through an activated phospho-Asp-tRNA(Asn) or phospho-Glu-tRNA(Gln). In Rhodopseudomonas palustris (strain HaA2), this protein is Aspartyl/glutamyl-tRNA(Asn/Gln) amidotransferase subunit B.